The sequence spans 72 residues: UPF0352 protein Patl_3379 (72 aa).

This sequence belongs to the UPF0352 family.

The protein is UPF0352 protein Patl_3379 of Pseudoalteromonas atlantica (strain T6c / ATCC BAA-1087).